The primary structure comprises 353 residues: D-alanine--D-alanine ligase (353 aa).

The 209-residue stretch at 141 to 349 folds into the ATP-grasp domain; sequence KAAFAAAGLP…LEELVSQLVI (209 aa). Residue 176-231 participates in ATP binding; that stretch reads EAKLKYPCFVKPANLGSSVGISKAQNRNELLIGLDKAASLDRRIVVEQGVSARELE. Mg(2+) is bound by residues Asp-302, Glu-316, and Asn-318.

It belongs to the D-alanine--D-alanine ligase family. It depends on Mg(2+) as a cofactor. Mn(2+) is required as a cofactor.

The protein localises to the cytoplasm. The enzyme catalyses 2 D-alanine + ATP = D-alanyl-D-alanine + ADP + phosphate + H(+). It functions in the pathway cell wall biogenesis; peptidoglycan biosynthesis. Its function is as follows. Cell wall formation. In Prochlorococcus marinus (strain MIT 9313), this protein is D-alanine--D-alanine ligase.